Consider the following 99-residue polypeptide: Nucleoid-associated protein SZO_16661 (99 aa).

This sequence belongs to the YbaB/EbfC family. In terms of assembly, homodimer.

The protein resides in the cytoplasm. The protein localises to the nucleoid. Its function is as follows. Binds to DNA and alters its conformation. May be involved in regulation of gene expression, nucleoid organization and DNA protection. The chain is Nucleoid-associated protein SZO_16661 from Streptococcus equi subsp. zooepidemicus (strain H70).